Here is a 465-residue protein sequence, read N- to C-terminus: Serine hydroxymethyltransferase (465 aa).

Lys241 carries the N6-(pyridoxal phosphate)lysine modification.

It belongs to the SHMT family. Homotetramer. Pyridoxal 5'-phosphate serves as cofactor. As to expression, highest expression in the ovary and testis. 6- to 7-fold lower expression in hemocyte, silk gland, midgut and fat body.

The enzyme catalyses (6R)-5,10-methylene-5,6,7,8-tetrahydrofolate + glycine + H2O = (6S)-5,6,7,8-tetrahydrofolate + L-serine. It functions in the pathway one-carbon metabolism; tetrahydrofolate interconversion. In terms of biological role, interconversion of serine and glycine. The protein is Serine hydroxymethyltransferase (692975) of Bombyx mori (Silk moth).